The chain runs to 145 residues: 3-dehydroquinate dehydratase (145 aa).

Tyr23 acts as the Proton acceptor in catalysis. Substrate is bound by residues Asn73, His79, and Asp86. His99 acts as the Proton donor in catalysis. Residues 100 to 101 (LS) and Arg110 contribute to the substrate site.

The protein belongs to the type-II 3-dehydroquinase family. As to quaternary structure, homododecamer.

It carries out the reaction 3-dehydroquinate = 3-dehydroshikimate + H2O. The protein operates within metabolic intermediate biosynthesis; chorismate biosynthesis; chorismate from D-erythrose 4-phosphate and phosphoenolpyruvate: step 3/7. In terms of biological role, catalyzes a trans-dehydration via an enolate intermediate. This Desulfitobacterium hafniense (strain DSM 10664 / DCB-2) protein is 3-dehydroquinate dehydratase.